Consider the following 196-residue polypeptide: Mitochondrial intermembrane space cysteine motif-containing protein MIX23 (196 aa).

Positions 99-114 (CEKEAAEMKNETDQQC) match the Cx14C motif motif. A Cx13C motif motif is present at residues 178-192 (CEQNNDYLKEFTQFC).

Belongs to the MIX23 family.

Its subcellular location is the mitochondrion intermembrane space. Functionally, regulator of the mitochondrial protein import machinery that is localized in the mitochondrial intermembrane space (IMS) and facilitates the transport of proteins from the cytosol into the mitochondrial matrix. Not essential for mitochondrial protein import but induced and required when mitochondrial import is compromised. Stimulates or stabilizes the translocation into the mitochondria of proteins such as OXA1, ATP1 and COX12. In Saccharomyces cerevisiae (strain ATCC 204508 / S288c) (Baker's yeast), this protein is Mitochondrial intermembrane space cysteine motif-containing protein MIX23.